The following is a 367-amino-acid chain: Phospho-N-acetylmuramoyl-pentapeptide-transferase (367 aa).

The next 10 helical transmembrane spans lie at 13-33 (ISGI…ALTL), 49-69 (LPLL…VPLL), 95-115 (MGGI…SNFA), 119-139 (LAVS…DWQI), 154-174 (LALQ…NQPA), 183-203 (WVSF…FVLV), 215-235 (IDGL…AIVA), 237-257 (TSPA…GFLA), 281-301 (AVAL…IFFV), and 347-367 (VSSF…IAPF).

It belongs to the glycosyltransferase 4 family. MraY subfamily. It depends on Mg(2+) as a cofactor.

It is found in the cell inner membrane. The enzyme catalyses UDP-N-acetyl-alpha-D-muramoyl-L-alanyl-gamma-D-glutamyl-meso-2,6-diaminopimeloyl-D-alanyl-D-alanine + di-trans,octa-cis-undecaprenyl phosphate = di-trans,octa-cis-undecaprenyl diphospho-N-acetyl-alpha-D-muramoyl-L-alanyl-D-glutamyl-meso-2,6-diaminopimeloyl-D-alanyl-D-alanine + UMP. Its pathway is cell wall biogenesis; peptidoglycan biosynthesis. Functionally, catalyzes the initial step of the lipid cycle reactions in the biosynthesis of the cell wall peptidoglycan: transfers peptidoglycan precursor phospho-MurNAc-pentapeptide from UDP-MurNAc-pentapeptide onto the lipid carrier undecaprenyl phosphate, yielding undecaprenyl-pyrophosphoryl-MurNAc-pentapeptide, known as lipid I. The sequence is that of Phospho-N-acetylmuramoyl-pentapeptide-transferase from Trichormus variabilis (strain ATCC 29413 / PCC 7937) (Anabaena variabilis).